The chain runs to 197 residues: Inner membrane-spanning protein YciB (197 aa).

The next 5 helical transmembrane spans lie at 22–42 (IYSATAALIIMVLLNVFYHWF), 48–68 (PSMMWITLILVMLFGGATLIF), 76–96 (WKPSILQWVLASGFLASHLIG), 121–141 (AAWVLFLLFSGALNLYVAYTF), and 144–164 (EIWVSFKLFGLMGLTILFLIG).

The protein belongs to the YciB family.

The protein localises to the cell inner membrane. In terms of biological role, plays a role in cell envelope biogenesis, maintenance of cell envelope integrity and membrane homeostasis. The sequence is that of Inner membrane-spanning protein YciB from Magnetococcus marinus (strain ATCC BAA-1437 / JCM 17883 / MC-1).